We begin with the raw amino-acid sequence, 103 residues long: Pilin (103 aa).

The first 30 residues, 1 to 30 (MYRFACRTLMLAACILATGVAGLGVGAQSA), serve as a signal peptide directing secretion. The segment covering 61-76 (HDDFHRDSDGPDHSRD) has biased composition (basic and acidic residues). The disordered stretch occupies residues 61–103 (HDDFHRDSDGPDHSRDYPGPILEGPVLDDPGAAPPPPAAGGGA). Positions 92–103 (AAPPPPAAGGGA) are enriched in pro residues.

The protein belongs to the mycobacterial pilin family. Forms a homomer composed of subunits assembled in a large structure.

It localises to the fimbrium. Its function is as follows. Structural subunit of pili, which are thin, flexible, coiled-coil, aggregative fibers. Mediates adhesion to the extracellular matrix, an event that would facilitate direct interaction with the host epithelium during infection in the lung or other tissues. This is Pilin (mtp) from Mycobacterium bovis (strain ATCC BAA-935 / AF2122/97).